Reading from the N-terminus, the 93-residue chain is SH3 domain-binding glutamic acid-rich-like protein 3 (93 aa).

S2 is subject to N-acetylserine. Residues 2-93 (SGLRVYSTSV…DTLQEFLKLA (92 aa)) form the Glutaredoxin domain. Residue T9 is glycosylated (O-linked (GalNAc...) threonine).

The protein belongs to the SH3BGR family. In terms of assembly, homodimer. Interacts with MYO1C (via its IQ motifs); the interaction is dependent on calcium and takes place at membrane ruffles. May be glycosylated.

It localises to the cytoplasm. The protein localises to the cytosol. Its subcellular location is the cell projection. It is found in the ruffle membrane. The protein resides in the nucleus. Its function is as follows. Could act as a modulator of glutaredoxin biological activity. May play a role in cytoskeleton organization. This is SH3 domain-binding glutamic acid-rich-like protein 3 (Sh3bgrl3) from Mus musculus (Mouse).